Reading from the N-terminus, the 652-residue chain is Carboxypeptidase S1 homolog A (652 aa).

A signal peptide spans 1–19; the sequence is MRLAASIAVALPVIGAASA. A disulfide bond links cysteine 50 and cysteine 121. Residues asparagine 77, asparagine 132, asparagine 161, asparagine 168, asparagine 184, and asparagine 202 are each glycosylated (N-linked (GlcNAc...) asparagine). Serine 238 is a catalytic residue. Residues asparagine 260, asparagine 299, asparagine 347, and asparagine 410 are each glycosylated (N-linked (GlcNAc...) asparagine). Intrachain disulfides connect cysteine 325–cysteine 361 and cysteine 332–cysteine 354. Residue aspartate 458 is part of the active site. Residue cysteine 461 participates in substrate binding. Asparagine 474, asparagine 492, and asparagine 505 each carry an N-linked (GlcNAc...) asparagine glycan. Residue histidine 516 is part of the active site. Residue glutamate 517 participates in substrate binding. Asparagine 594 carries N-linked (GlcNAc...) asparagine glycosylation. A disordered region spans residues 608 to 628; the sequence is AASKGNPPPTTTSSPTASPTA. A compositionally biased stretch (low complexity) spans 618 to 628; sequence TTSSPTASPTA. Glycine 629 carries GPI-anchor amidated glycine lipidation. The propeptide at 630 to 652 is removed in mature form; the sequence is SAMLKAPVAMLAISALTVLAFYL.

The protein belongs to the peptidase S10 family.

The protein localises to the cell membrane. The enzyme catalyses Preferential release of a C-terminal arginine or lysine residue.. Functionally, extracellular serine carboxypeptidase that contributes to pathogenicity. In Arthroderma benhamiae (strain ATCC MYA-4681 / CBS 112371) (Trichophyton mentagrophytes), this protein is Carboxypeptidase S1 homolog A (SCPA).